A 189-amino-acid polypeptide reads, in one-letter code: Heme-binding protein 1 (189 aa).

It belongs to the HEBP family. Monomer.

It is found in the cytoplasm. In terms of biological role, may bind free porphyrinogens that may be present in the cell and thus facilitate removal of these potentially toxic compound. Binds with a high affinity to one molecule of heme or porphyrins. It binds metalloporphyrins, free porphyrins and N-methylprotoporphyrin with similar affinities. This Sus scrofa (Pig) protein is Heme-binding protein 1 (HEBP1).